Here is a 264-residue protein sequence, read N- to C-terminus: 4-oxalocrotonate decarboxylase (264 aa).

Belongs to the hydratase/decarboxylase family.

It carries out the reaction (3E)-2-oxohex-3-enedioate + H(+) = 2-oxopent-4-enoate + CO2. It functions in the pathway aromatic compound metabolism; benzoate degradation via hydroxylation. The sequence is that of 4-oxalocrotonate decarboxylase (dmpH) from Pseudomonas sp. (strain CF600).